Here is a 389-residue protein sequence, read N- to C-terminus: Phosphoglycerate kinase (389 aa).

Substrate-binding positions include 21-23 (DLN), Arg-36, 59-62 (HLGR), Arg-112, and Arg-145. ATP is bound by residues Lys-196, Glu-313, and 342 to 345 (GGDT).

The protein belongs to the phosphoglycerate kinase family. As to quaternary structure, monomer.

The protein resides in the cytoplasm. It catalyses the reaction (2R)-3-phosphoglycerate + ATP = (2R)-3-phospho-glyceroyl phosphate + ADP. Its pathway is carbohydrate degradation; glycolysis; pyruvate from D-glyceraldehyde 3-phosphate: step 2/5. In Histophilus somni (strain 2336) (Haemophilus somnus), this protein is Phosphoglycerate kinase.